Here is a 322-residue protein sequence, read N- to C-terminus: Probable cell division protein WhiA (322 aa).

The segment at residues 279-312 (SLKELGELWTPPVGKSGVNHRIRKIERLAEKLRS) is a DNA-binding region (H-T-H motif).

The protein belongs to the WhiA family.

In terms of biological role, involved in cell division and chromosome segregation. The polypeptide is Probable cell division protein WhiA (Desulforamulus reducens (strain ATCC BAA-1160 / DSM 100696 / MI-1) (Desulfotomaculum reducens)).